A 746-amino-acid polypeptide reads, in one-letter code: MGSHSTGLEETLGVLPSWLFCKMLRFLKRPLVVTVDINLNLVALTGLGLLTRLWQLSYPRAVVFDEVYYGQYISFYMKRIFFLDDSGPPFGHMLLALGGWLGGFDGNFLWNRIGAEYSSNVPIWSLRLLPALAGALSVPMAYQIVLELHFSHGAAIGAALLMLIENALITQSRLMLLESILIFFNLLAVLSYLKFFNSQTHSPFSVHWWLWLLLTGVSCSCAVGIKYMGIFTYLLVLGIAAVHAWNLIGDQTLSNMRVLSHLLARIVALLVVPVFLYLLFFYVHLMLLYRSGPHDQIMSSAFQASLEGGLARITQGQPLEVAFGSQVTLKSVSGKPLPCWLHSHKNTYPMIYENGRGSSHQQQVTCYPFKDINNWWIVKDPGRHQLVVNNPPRPVRHGDIVQLVHGMTTRLLNTHDVAAPLSPHSQEVSCYIDYNISMPAQNLWKLDIVNRESNRDTWKTILSEVRFVHVNTSAILKLSGAHLPDWGFRQLEVVGEKLSPGYHESMVWNVEEHRYGKSHEQKERELELHSPTQLDISRNLSFMARFSELQWKMLTLKNEDLEHQYSSTPLEWLTLDTNIAYWLHPRTSAQIHLLGNIVIWTSASLATVVYTLLFFWYLLRRRRSICDLPEDAWSRWVLAGALCTGGWALNYLPFFLMERVLFLYHYLPALTFQILLLPIVLQHASDHLCRSQLQRNVFSALVVAWYSSACHVSNMLRPLTYGDTSLSPGELRALRWKDSWDILIRK.

The next 7 helical transmembrane spans lie at 30–50 (PLVV…LGLL), 90–110 (FGHM…NFLW), 121–141 (VPIW…VPMA), 144–164 (IVLE…LMLI), 176–196 (LLES…LKFF), 228–248 (MGIF…WNLI), and 266–286 (IVAL…VHLM). MIR domains are found at residues 318–381 (PLEV…VKDP), 392–449 (PRPV…LDIV), and 453–513 (SNRD…VEEH). Residues Asn-435, Asn-471, and Asn-539 are each glycosylated (N-linked (GlcNAc...) asparagine). 3 helical membrane-spanning segments follow: residues 597-617 (IVIW…FFWY), 636-656 (WVLA…PFFL), and 660-680 (VLFL…LPIV).

Belongs to the glycosyltransferase 39 family.

The protein resides in the endoplasmic reticulum membrane. The enzyme catalyses a di-trans,poly-cis-dolichyl beta-D-mannosyl phosphate + L-seryl-[protein] = 3-O-(alpha-D-mannosyl)-L-seryl-[protein] + a di-trans,poly-cis-dolichyl phosphate + H(+). It catalyses the reaction a di-trans,poly-cis-dolichyl beta-D-mannosyl phosphate + L-threonyl-[protein] = 3-O-(alpha-D-mannosyl)-L-threonyl-[protein] + a di-trans,poly-cis-dolichyl phosphate + H(+). The protein operates within protein modification; protein glycosylation. Transfers mannosyl residues to the hydroxyl group of serine or threonine residues. Coexpression of both POMT1 and POMT2 is necessary for enzyme activity, expression of either POMT1 or POMT2 alone is insufficient. Essentially dedicated to O-mannosylation of alpha-DAG1 and few other proteins but not of cadherins and protocaherins. This is Protein O-mannosyl-transferase 1 (Pomt1) from Mus musculus (Mouse).